Here is a 928-residue protein sequence, read N- to C-terminus: Eukaryotic translation initiation factor 3 subunit C (928 aa).

2 disordered regions span residues 1-37 and 157-286; these read MSRF…SDDE and FREA…EDGE. Residues 11–20 show a composition bias toward acidic residues; that stretch reads SESESSEEEV. Residues 22–33 show a composition bias toward polar residues; the sequence is TQFNNKAQNFQF. Phosphoserine occurs at positions 34, 165, 177, and 186. The segment covering 162–171 has biased composition (acidic residues); it reads DQESDVDEGE. The span at 172 to 184 shows a compositional bias: basic and acidic residues; it reads GDVHDSDADRAGD. Positions 215-240 are enriched in acidic residues; that stretch reads DDDDSEDSIDWDPDTESETESSEDEN. Residues 245–264 are compositionally biased toward basic and acidic residues; the sequence is MRERFLKRTTEKEDKDDDKR. Residues 265–277 are compositionally biased toward basic residues; sequence KDKRKEQKHKVRK. Residues 656–832 form the PCI domain; it reads FHMHINLELL…ETVVMHRSEP (177 aa). The segment at 864–928 is disordered; sequence FFQRGNMGNR…QQQVHTIDEE (65 aa). Residues 898–909 show a composition bias toward basic residues; that stretch reads QRNRNQRGHHKQ. Residues 910-921 are compositionally biased toward low complexity; sequence NQQQNQQQQQQQ.

It belongs to the eIF-3 subunit C family. Component of the eukaryotic translation initiation factor 3 (eIF-3) complex. The eIF-3 complex interacts with pix.

The protein localises to the cytoplasm. Functionally, component of the eukaryotic translation initiation factor 3 (eIF-3) complex, which is involved in protein synthesis of a specialized repertoire of mRNAs and, together with other initiation factors, stimulates binding of mRNA and methionyl-tRNAi to the 40S ribosome. The eIF-3 complex specifically targets and initiates translation of a subset of mRNAs involved in cell proliferation. In Drosophila grimshawi (Hawaiian fruit fly), this protein is Eukaryotic translation initiation factor 3 subunit C.